The primary structure comprises 161 residues: Large ribosomal subunit protein uL16 (161 aa).

A disordered region spans residues 140-161 (LNKGNYKPAKTPVTADDSESSS).

It belongs to the universal ribosomal protein uL16 family. Part of the 50S ribosomal subunit.

Functionally, binds 23S rRNA and is also seen to make contacts with the A and possibly P site tRNAs. This Prochlorococcus marinus (strain NATL2A) protein is Large ribosomal subunit protein uL16.